The primary structure comprises 331 residues: Phosphoribosylformylglycinamidine cyclo-ligase (331 aa).

It belongs to the AIR synthase family.

The protein localises to the cytoplasm. The catalysed reaction is 2-formamido-N(1)-(5-O-phospho-beta-D-ribosyl)acetamidine + ATP = 5-amino-1-(5-phospho-beta-D-ribosyl)imidazole + ADP + phosphate + H(+). Its pathway is purine metabolism; IMP biosynthesis via de novo pathway; 5-amino-1-(5-phospho-D-ribosyl)imidazole from N(2)-formyl-N(1)-(5-phospho-D-ribosyl)glycinamide: step 2/2. The protein is Phosphoribosylformylglycinamidine cyclo-ligase of Clostridium botulinum (strain 657 / Type Ba4).